A 718-amino-acid chain; its full sequence is Catalase-peroxidase 1 (718 aa).

Positions 93 to 221 (WHSAGTYRIA…LAAVMMGLIY (129 aa)) form a cross-link, tryptophyl-tyrosyl-methioninium (Trp-Tyr) (with M-247). H94 serves as the catalytic Proton acceptor. The tryptophyl-tyrosyl-methioninium (Tyr-Met) (with W-93) cross-link spans 221 to 247 (YVNPEGVDGNPDPLKTAQDMRVTFARM). H262 is a heme b binding site.

This sequence belongs to the peroxidase family. Peroxidase/catalase subfamily. As to quaternary structure, homodimer or homotetramer. It depends on heme b as a cofactor. In terms of processing, formation of the three residue Trp-Tyr-Met cross-link is important for the catalase, but not the peroxidase activity of the enzyme.

The catalysed reaction is H2O2 + AH2 = A + 2 H2O. It carries out the reaction 2 H2O2 = O2 + 2 H2O. Bifunctional enzyme with both catalase and broad-spectrum peroxidase activity. This is Catalase-peroxidase 1 from Shewanella amazonensis (strain ATCC BAA-1098 / SB2B).